The following is a 644-amino-acid chain: Exoribonuclease 2 (644 aa).

An RNB domain is found at 189-516; that stretch reads RQDLTALNFV…NHRLLKAVIK (328 aa). Residues 561 to 643 form the S1 motif domain; that stretch reads NTRFAAEIID…ETRSIIARPA (83 aa).

The protein belongs to the RNR ribonuclease family. RNase II subfamily.

It is found in the cytoplasm. The enzyme catalyses Exonucleolytic cleavage in the 3'- to 5'-direction to yield nucleoside 5'-phosphates.. Involved in mRNA degradation. Hydrolyzes single-stranded polyribonucleotides processively in the 3' to 5' direction. The polypeptide is Exoribonuclease 2 (Salmonella paratyphi A (strain ATCC 9150 / SARB42)).